Consider the following 73-residue polypeptide: MKALVICLLVIFAAVIAVPVESRRKHLDYGVITKCAGPNPPPGCYPPGAQQKNPTPANEYRRGCSKITRCKRD.

Residues 1-17 (MKALVICLLVIFAAVIA) form the signal peptide. 2 disulfide bridges follow: cysteine 35–cysteine 44 and cysteine 64–cysteine 70.

The protein belongs to the plant rapid alkalinization factor (RALF) family. In terms of tissue distribution, expressed in flowers.

The protein localises to the secreted. Its function is as follows. Cell signaling peptide that may regulate plant stress, growth, and development. Mediates a rapid alkalinization of extracellular space by mediating a transient increase in the cytoplasmic Ca(2+) concentration leading to a calcium-dependent signaling events through a cell surface receptor and a concomitant activation of some intracellular mitogen-activated protein kinases. In Arabidopsis thaliana (Mouse-ear cress), this protein is Protein RALF-like 10 (RALFL10).